A 183-amino-acid chain; its full sequence is Ribosome maturation factor RimM (183 aa).

Residues 104 to 183 (EGDYYWKDLI…TIEVDWDPGF (80 aa)) enclose the PRC barrel domain.

This sequence belongs to the RimM family. Binds ribosomal protein uS19.

The protein resides in the cytoplasm. In terms of biological role, an accessory protein needed during the final step in the assembly of 30S ribosomal subunit, possibly for assembly of the head region. Essential for efficient processing of 16S rRNA. May be needed both before and after RbfA during the maturation of 16S rRNA. It has affinity for free ribosomal 30S subunits but not for 70S ribosomes. This Cronobacter sakazakii (strain ATCC BAA-894) (Enterobacter sakazakii) protein is Ribosome maturation factor RimM.